The chain runs to 445 residues: MISPVSSILASIWDNSKLLLDHTSVLSIALIGVACAISIRSILYVRLACANYSILLLTHAQRLRLAYSTPLRHVPGPWYAKFTALGLRANDVAGNRWYYVQGLHKKYGSIVRIAPEEVAISDPKVVSKVHALGTEFRKRQQPGTPFNIFSISDPKAHRTRQRFYAKAFSDETLKASTEPAVRQLIKTAVASIKRDAALRKDHTADVYKWCMLFGSDVAFQVIYGNSNTEGLMATQKTTDEVIMGAYLQRMNAWAQFCFPVFLLGRWLSPLSPTLHNIFRVEEKYGDFWQEGQRQREIAARTVFVQNTKYSKNDGVFSVSDEVKLSDVDIAHDITTFLGAGGEPVGASLVFLIWQVLRMPDLQRELEAEVAGLTEPITDATTAQLPILNGVIYETLRLYGGGVTQMPRYAPIATELGGYVIPPGTAVTTHTGALHRNPAAWDDPEK.

The chain crosses the membrane as a helical span at residues 25-45 (VLSIALIGVACAISIRSILYV). Asparagine 51 carries N-linked (GlcNAc...) asparagine glycosylation.

Belongs to the cytochrome P450 family.

The protein localises to the membrane. The protein operates within secondary metabolite biosynthesis. In terms of biological role, methylphloroacetophenone oxidase; part of the gene cluster that mediates the biosynthesis of usnic acid, a dibenzofuran lichen product possessing a broad spectrum of biological activities. Two genes, mpas and mpao, comprise the usnic acid biosynthetic gene cluster with a single post-PKS enzyme, the methylphloracetophenone oxidase (mpao). The methylphloroacetophenone synthase (mpas) is a non-reducing polyketide synthase that produces methylphloracetophenone from acetate via a methylated tetraketide intermediate. The methylphloroacetophenone oxidase then carries out the oxidative dimerization of methylphloracetophenone to usnic acid. This Cladonia uncialis (Cup lichen) protein is Methylphloroacetophenone oxidase.